The primary structure comprises 239 residues: Short palate, lung and nasal epithelium carcinoma-associated protein 2A (239 aa).

The signal sequence occupies residues 1–20; it reads MVQLWKLVLLCGLLAGTSES. Cysteines 166 and 209 form a disulfide.

It belongs to the BPI/LBP/Plunc superfamily. Plunc family. In terms of tissue distribution, detected in salivary tissues: parotid, submandibular and sublingual glands.

The protein localises to the secreted. This Bos taurus (Bovine) protein is Short palate, lung and nasal epithelium carcinoma-associated protein 2A (SPLUNC2A).